Reading from the N-terminus, the 79-residue chain is uncharacterized protein (79 aa).

This is an uncharacterized protein from Ovis aries (Sheep).